A 348-amino-acid polypeptide reads, in one-letter code: Adenosine deaminase (348 aa).

Positions 16 and 18 each coordinate Zn(2+). 3 residues coordinate substrate: His18, Asp20, and Gly174. His201 lines the Zn(2+) pocket. The Proton donor role is filled by Glu204. Asp282 lines the Zn(2+) pocket.

This sequence belongs to the metallo-dependent hydrolases superfamily. Adenosine and AMP deaminases family. Adenosine deaminase subfamily. The cofactor is Zn(2+).

It carries out the reaction adenosine + H2O + H(+) = inosine + NH4(+). It catalyses the reaction 2'-deoxyadenosine + H2O + H(+) = 2'-deoxyinosine + NH4(+). In terms of biological role, catalyzes the hydrolytic deamination of adenosine and 2-deoxyadenosine. The sequence is that of Adenosine deaminase from Clostridium kluyveri (strain ATCC 8527 / DSM 555 / NBRC 12016 / NCIMB 10680 / K1).